We begin with the raw amino-acid sequence, 227 residues long: 7-cyano-7-deazaguanine synthase (227 aa).

8 to 18 (FSGGQDSTTCL) contacts ATP. Residues C187, C196, C199, and C202 each coordinate Zn(2+).

Belongs to the QueC family. It depends on Zn(2+) as a cofactor.

It catalyses the reaction 7-carboxy-7-deazaguanine + NH4(+) + ATP = 7-cyano-7-deazaguanine + ADP + phosphate + H2O + H(+). The protein operates within purine metabolism; 7-cyano-7-deazaguanine biosynthesis. In terms of biological role, catalyzes the ATP-dependent conversion of 7-carboxy-7-deazaguanine (CDG) to 7-cyano-7-deazaguanine (preQ(0)). This chain is 7-cyano-7-deazaguanine synthase, found in Aliivibrio fischeri (strain MJ11) (Vibrio fischeri).